Reading from the N-terminus, the 220-residue chain is Cytidylate kinase (220 aa).

Position 9–17 (9–17 (GPAASGKST)) interacts with ATP.

The protein belongs to the cytidylate kinase family. Type 1 subfamily.

It localises to the cytoplasm. It carries out the reaction CMP + ATP = CDP + ADP. The catalysed reaction is dCMP + ATP = dCDP + ADP. The chain is Cytidylate kinase from Thermotoga sp. (strain RQ2).